The chain runs to 342 residues: Ribosomal RNA small subunit methyltransferase C (342 aa).

The protein belongs to the methyltransferase superfamily. RsmC family. As to quaternary structure, monomer.

The protein resides in the cytoplasm. It catalyses the reaction guanosine(1207) in 16S rRNA + S-adenosyl-L-methionine = N(2)-methylguanosine(1207) in 16S rRNA + S-adenosyl-L-homocysteine + H(+). Functionally, specifically methylates the guanine in position 1207 of 16S rRNA in the 30S particle. The polypeptide is Ribosomal RNA small subunit methyltransferase C (Aeromonas hydrophila subsp. hydrophila (strain ATCC 7966 / DSM 30187 / BCRC 13018 / CCUG 14551 / JCM 1027 / KCTC 2358 / NCIMB 9240 / NCTC 8049)).